A 443-amino-acid chain; its full sequence is Histidinol dehydrogenase (443 aa).

Residues tyrosine 127, glutamine 185, and asparagine 208 each contribute to the NAD(+) site. Substrate contacts are provided by serine 234, glutamine 256, and histidine 259. Zn(2+)-binding residues include glutamine 256 and histidine 259. Active-site proton acceptor residues include glutamate 323 and histidine 324. Residues histidine 324, aspartate 357, glutamate 411, and histidine 416 each coordinate substrate. Residue aspartate 357 participates in Zn(2+) binding. Histidine 416 contributes to the Zn(2+) binding site.

This sequence belongs to the histidinol dehydrogenase family. The cofactor is Zn(2+).

The enzyme catalyses L-histidinol + 2 NAD(+) + H2O = L-histidine + 2 NADH + 3 H(+). It functions in the pathway amino-acid biosynthesis; L-histidine biosynthesis; L-histidine from 5-phospho-alpha-D-ribose 1-diphosphate: step 9/9. Its function is as follows. Catalyzes the sequential NAD-dependent oxidations of L-histidinol to L-histidinaldehyde and then to L-histidine. This Photobacterium profundum (strain SS9) protein is Histidinol dehydrogenase.